We begin with the raw amino-acid sequence, 130 residues long: Small ribosomal subunit protein uS17m (130 aa).

This sequence belongs to the universal ribosomal protein uS17 family. In terms of assembly, component of the mitochondrial ribosome small subunit (28S) which comprises a 12S rRNA and about 30 distinct proteins.

It localises to the mitochondrion. The chain is Small ribosomal subunit protein uS17m (MRPS17) from Bos taurus (Bovine).